Here is a 272-residue protein sequence, read N- to C-terminus: Small ribosomal subunit protein uS2 (272 aa).

Residues 251–272 form a disordered region; sequence LLTEGAPAAEAPAEAEGETKAE. Residues 253–264 show a composition bias toward low complexity; sequence TEGAPAAEAPAE.

The protein belongs to the universal ribosomal protein uS2 family.

The sequence is that of Small ribosomal subunit protein uS2 from Bifidobacterium adolescentis (strain ATCC 15703 / DSM 20083 / NCTC 11814 / E194a).